Here is a 115-residue protein sequence, read N- to C-terminus: UPF0738 protein SACOL1009 (115 aa).

This sequence belongs to the UPF0738 family.

This chain is UPF0738 protein SACOL1009, found in Staphylococcus aureus (strain COL).